The chain runs to 72 residues: Translation initiation factor IF-1 (72 aa).

The S1-like domain maps to 1 to 72 (MSKEELLEFP…TKGRITYRFK (72 aa)).

This sequence belongs to the IF-1 family. In terms of assembly, component of the 30S ribosomal translation pre-initiation complex which assembles on the 30S ribosome in the order IF-2 and IF-3, IF-1 and N-formylmethionyl-tRNA(fMet); mRNA recruitment can occur at any time during PIC assembly.

It is found in the cytoplasm. Functionally, one of the essential components for the initiation of protein synthesis. Stabilizes the binding of IF-2 and IF-3 on the 30S subunit to which N-formylmethionyl-tRNA(fMet) subsequently binds. Helps modulate mRNA selection, yielding the 30S pre-initiation complex (PIC). Upon addition of the 50S ribosomal subunit IF-1, IF-2 and IF-3 are released leaving the mature 70S translation initiation complex. The protein is Translation initiation factor IF-1 of Parvibaculum lavamentivorans (strain DS-1 / DSM 13023 / NCIMB 13966).